A 661-amino-acid chain; its full sequence is Bifunctional polymyxin resistance protein ArnA (661 aa).

Positions 1–304 are formyltransferase ArnAFT; that stretch reads MKAVVFAYHD…ALGLVSGAVI (304 aa). Catalysis depends on histidine 104, which acts as the Proton donor; for formyltransferase activity. (6R)-10-formyltetrahydrofolate contacts are provided by residues arginine 114 and 136–140; that span reads VNRAD. A dehydrogenase ArnADH region spans residues 314 to 661; sequence RRTRVLILGV…TVELVDDKNP (348 aa). Residues aspartate 347 and 368-369 each bind NAD(+); that span reads DI. Residues alanine 393, tyrosine 398, and 432 to 433 each bind UDP-alpha-D-glucuronate; that span reads TS. The Proton acceptor; for decarboxylase activity role is filled by glutamate 434. UDP-alpha-D-glucuronate-binding positions include arginine 460, asparagine 492, 526 to 535, and tyrosine 613; that span reads KLIEGGKQKR. Arginine 619 serves as the catalytic Proton donor; for decarboxylase activity.

In the N-terminal section; belongs to the Fmt family. UDP-L-Ara4N formyltransferase subfamily. This sequence in the C-terminal section; belongs to the NAD(P)-dependent epimerase/dehydratase family. UDP-glucuronic acid decarboxylase subfamily. Homohexamer, formed by a dimer of trimers.

It catalyses the reaction UDP-alpha-D-glucuronate + NAD(+) = UDP-beta-L-threo-pentopyranos-4-ulose + CO2 + NADH. The enzyme catalyses UDP-4-amino-4-deoxy-beta-L-arabinose + (6R)-10-formyltetrahydrofolate = UDP-4-deoxy-4-formamido-beta-L-arabinose + (6S)-5,6,7,8-tetrahydrofolate + H(+). It participates in nucleotide-sugar biosynthesis; UDP-4-deoxy-4-formamido-beta-L-arabinose biosynthesis; UDP-4-deoxy-4-formamido-beta-L-arabinose from UDP-alpha-D-glucuronate: step 1/3. It functions in the pathway nucleotide-sugar biosynthesis; UDP-4-deoxy-4-formamido-beta-L-arabinose biosynthesis; UDP-4-deoxy-4-formamido-beta-L-arabinose from UDP-alpha-D-glucuronate: step 3/3. Its pathway is bacterial outer membrane biogenesis; lipopolysaccharide biosynthesis. Bifunctional enzyme that catalyzes the oxidative decarboxylation of UDP-glucuronic acid (UDP-GlcUA) to UDP-4-keto-arabinose (UDP-Ara4O) and the addition of a formyl group to UDP-4-amino-4-deoxy-L-arabinose (UDP-L-Ara4N) to form UDP-L-4-formamido-arabinose (UDP-L-Ara4FN). The modified arabinose is attached to lipid A and is required for resistance to polymyxin and cationic antimicrobial peptides. The sequence is that of Bifunctional polymyxin resistance protein ArnA from Klebsiella pneumoniae subsp. pneumoniae (strain ATCC 700721 / MGH 78578).